Here is a 20-residue protein sequence, read N- to C-terminus: LECNKLVDIAYITCPAGKNL.

In terms of assembly, monomer. Homodimerizes during storage at 30 degrees Celsius (observed after 3 days). In terms of tissue distribution, expressed by the venom gland.

It localises to the secreted. Its subcellular location is the target cell membrane. In terms of biological role, this three-finger cytotoxin shows cytotoxicity and direct nephrotoxicity. The cytotoxicity has been observed on B16F10 melanoma cells (EC(50)=2.56 uM) and on kidney proximal tubular epithelium LLCPK1 cells (EC(50)=4.79 uM); it is due to necrotic cell death and not to apoptosis. Direct nephrotoxicity has been deduced from binding to LLCPK1 cell line and to kidney membranes. In addition, after intravenous injection into mice tail vein, the toxin principally accumulates in kidney, but only minimally in blood, liver and brain. This Daboia russelii (Russel's viper) protein is 7.2 kDa cytotoxin RVV-7.